Here is a 1283-residue protein sequence, read N- to C-terminus: 5-oxoprolinase PfmaA (1283 aa).

A disordered region spans residues 1256–1283 (NTPGGGAWGKPEGDADGYREEDQAGDGI). The span at 1266-1277 (PEGDADGYREED) shows a compositional bias: basic and acidic residues.

The protein belongs to the oxoprolinase family. Homodimer.

It catalyses the reaction 5-oxo-L-proline + ATP + 2 H2O = L-glutamate + ADP + phosphate + H(+). 5-oxoprolinase; part of the gene cluster that mediates the biosynthesis of dihydroxynaphthalene (DHN)-melanin, a bluish-green pigment forming a dark layer in the conidial wall that protects the conidia from UV radiations. The first step of the pathway is the production of the pentaketide 1,3,6,8-tetrahydroxynaphthalene (1,3,6,8-THN or T4HN) by the polyketide synthase PfmaE though condensation of acetyl-CoA with malonyl-CoA. T4HN is not stable and easily oxidizes into the stable form flaviolin. T4HN is also substrate of the hydroxynaphthalene reductase PfmaG to yield scytalone. The scytalone dehydratase PfmaJ then reduces scytalone to 1,3,8-THN. 1,3,8-THN is then substrate of the hydroxynaphthalene reductase PfmaI to yield vermelone. Vermelone is further converted by the multicopper oxidase PfmaD to 1,8-DHN. Finally the laccase PFICI_06862 transforms 1,8-DHN to DHN-melanin. The roles of the 5-oxoprolinase PfmaA and the proline iminopeptidase PfmaB within the cluster have not been elucidated yet. In Pestalotiopsis fici (strain W106-1 / CGMCC3.15140), this protein is 5-oxoprolinase PfmaA.